A 421-amino-acid chain; its full sequence is Serine hydroxymethyltransferase (421 aa).

(6S)-5,6,7,8-tetrahydrofolate is bound by residues Leu-121 and 125–127 (GHL). N6-(pyridoxal phosphate)lysine is present on Lys-229.

Belongs to the SHMT family. In terms of assembly, homodimer. It depends on pyridoxal 5'-phosphate as a cofactor.

The protein localises to the cytoplasm. The enzyme catalyses (6R)-5,10-methylene-5,6,7,8-tetrahydrofolate + glycine + H2O = (6S)-5,6,7,8-tetrahydrofolate + L-serine. It participates in one-carbon metabolism; tetrahydrofolate interconversion. The protein operates within amino-acid biosynthesis; glycine biosynthesis; glycine from L-serine: step 1/1. Functionally, catalyzes the reversible interconversion of serine and glycine with tetrahydrofolate (THF) serving as the one-carbon carrier. This reaction serves as the major source of one-carbon groups required for the biosynthesis of purines, thymidylate, methionine, and other important biomolecules. Also exhibits THF-independent aldolase activity toward beta-hydroxyamino acids, producing glycine and aldehydes, via a retro-aldol mechanism. The chain is Serine hydroxymethyltransferase from Haemophilus influenzae (strain 86-028NP).